The following is a 321-amino-acid chain: Olfactory receptor 5K3 (321 aa).

Over 1–25 (MNKENHSLIAEFILTGFTYHPKLKT) the chain is Extracellular. Asparagine 5 is a glycosylation site (N-linked (GlcNAc...) asparagine). Residues 26 to 46 (VLFVVFFAIYLITMVGNIGLV) traverse the membrane as a helical segment. The Cytoplasmic segment spans residues 47-56 (ALIYIEQRLH). The helical transmembrane segment at 57–77 (TPMYIFLGNLVLMDSCCSSAI) threads the bilayer. Residues 78 to 97 (TPKMLENFFSEDKRITLYEC) are Extracellular-facing. Residues cysteine 97 and cysteine 179 are joined by a disulfide bond. The chain crosses the membrane as a helical span at residues 98–118 (MAQFYFLCLAETTDCFLLAAM). The Cytoplasmic portion of the chain corresponds to 119–143 (AYDCYVAICNPLQYHTMMSKTLCIQ). Residues 144–164 (MTAGAYLAGNLHPMIEVEFLL) traverse the membrane as a helical segment. Over 165–196 (RLTFCGSHQINHFFCDVLPLYRLSCINPYINE) the chain is Extracellular. The chain crosses the membrane as a helical span at residues 197-217 (LVLFILAGSIQIFTIVLVSYF). At 218-235 (YILFTIFTMKSKEGRGKA) the chain is on the cytoplasmic side. The helical transmembrane segment at 236-256 (LSTCASHFLSVSIFCDSLLFM) threads the bilayer. Over 257–269 (YARPGAVNEGDKD) the chain is Extracellular. Residues 270–290 (IPVAIFYTLVIPLLNPFIYSL) form a helical membrane-spanning segment. The Cytoplasmic portion of the chain corresponds to 291-321 (RNKEVINIMKKIMKKRKFCHILKQMSSPLAT).

Belongs to the G-protein coupled receptor 1 family.

It is found in the cell membrane. In terms of biological role, odorant receptor. The protein is Olfactory receptor 5K3 (OR5K3) of Homo sapiens (Human).